Consider the following 348-residue polypeptide: Protein RecA (348 aa).

Residue 64–71 (GPESSGKT) participates in ATP binding. The segment covering 325 to 335 (YEIDGSSKEPL) has biased composition (basic and acidic residues). The segment at 325 to 348 (YEIDGSSKEPLDEKEETLSLLDDE) is disordered.

Belongs to the RecA family.

The protein localises to the cytoplasm. Can catalyze the hydrolysis of ATP in the presence of single-stranded DNA, the ATP-dependent uptake of single-stranded DNA by duplex DNA, and the ATP-dependent hybridization of homologous single-stranded DNAs. It interacts with LexA causing its activation and leading to its autocatalytic cleavage. This Listeria monocytogenes serotype 1/2a (strain 10403S) protein is Protein RecA.